A 684-amino-acid polypeptide reads, in one-letter code: UvrABC system protein B (684 aa).

In terms of domain architecture, Helicase ATP-binding spans E30–R188. G43 to T50 provides a ligand contact to ATP. Positions Y96–I119 match the Beta-hairpin motif. One can recognise a Helicase C-terminal domain in the interval Q435–L601. The UVR domain occupies Y641–R676.

Belongs to the UvrB family. Forms a heterotetramer with UvrA during the search for lesions. Interacts with UvrC in an incision complex.

It localises to the cytoplasm. The UvrABC repair system catalyzes the recognition and processing of DNA lesions. A damage recognition complex composed of 2 UvrA and 2 UvrB subunits scans DNA for abnormalities. Upon binding of the UvrA(2)B(2) complex to a putative damaged site, the DNA wraps around one UvrB monomer. DNA wrap is dependent on ATP binding by UvrB and probably causes local melting of the DNA helix, facilitating insertion of UvrB beta-hairpin between the DNA strands. Then UvrB probes one DNA strand for the presence of a lesion. If a lesion is found the UvrA subunits dissociate and the UvrB-DNA preincision complex is formed. This complex is subsequently bound by UvrC and the second UvrB is released. If no lesion is found, the DNA wraps around the other UvrB subunit that will check the other stand for damage. In Chlorobium limicola (strain DSM 245 / NBRC 103803 / 6330), this protein is UvrABC system protein B.